Reading from the N-terminus, the 249-residue chain is ATP synthase subunit a, chloroplastic (249 aa).

5 consecutive transmembrane segments (helical) span residues 40-60 (QVLI…VLAV), 97-117 (VPFI…GALL), 136-156 (INTT…AGLS), 201-221 (LVVV…VMFL), and 222-242 (GLFT…AYIG).

It belongs to the ATPase A chain family. F-type ATPases have 2 components, CF(1) - the catalytic core - and CF(0) - the membrane proton channel. CF(1) has five subunits: alpha(3), beta(3), gamma(1), delta(1), epsilon(1). CF(0) has four main subunits: a, b, b' and c.

Its subcellular location is the plastid. It is found in the chloroplast thylakoid membrane. Key component of the proton channel; it plays a direct role in the translocation of protons across the membrane. This is ATP synthase subunit a, chloroplastic from Arabis hirsuta (Hairy rock-cress).